Here is a 175-residue protein sequence, read N- to C-terminus: MLTSGIILLSGGLLSPNPGLIFWTAVTFVIVLLILKQLAWGPIISALEEREKGIQSSIDRAYSAKDEAEAILRKNRDMLAKADLESERIIREGKEYGEKLRQEMAEKAQFEAKKMIASAKDEIEQEKRRALDVLRNEVADLAIMGAEKIIKSSLDADTQKKIVDSMIRDLASKRN.

The helical transmembrane segment at 20–40 (LIFWTAVTFVIVLLILKQLAW) threads the bilayer.

This sequence belongs to the ATPase B chain family. In terms of assembly, F-type ATPases have 2 components, F(1) - the catalytic core - and F(0) - the membrane proton channel. F(1) has five subunits: alpha(3), beta(3), gamma(1), delta(1), epsilon(1). F(0) has four main subunits: a(1), b(2) and c(10-14). The alpha and beta chains form an alternating ring which encloses part of the gamma chain. F(1) is attached to F(0) by a central stalk formed by the gamma and epsilon chains, while a peripheral stalk is formed by the delta and b chains.

Its subcellular location is the cell inner membrane. Functionally, f(1)F(0) ATP synthase produces ATP from ADP in the presence of a proton or sodium gradient. F-type ATPases consist of two structural domains, F(1) containing the extramembraneous catalytic core and F(0) containing the membrane proton channel, linked together by a central stalk and a peripheral stalk. During catalysis, ATP synthesis in the catalytic domain of F(1) is coupled via a rotary mechanism of the central stalk subunits to proton translocation. Component of the F(0) channel, it forms part of the peripheral stalk, linking F(1) to F(0). This Chlorobium limicola (strain DSM 245 / NBRC 103803 / 6330) protein is ATP synthase subunit b.